The following is a 312-amino-acid chain: MTKIIFMGTPEFSVPVLTQLASTYDVVAVVTQPDRPVGRKRVLTPPPVKKAALELAIPVYQPEKLRTSSELEELIALEADLLVTAAYGQILPNSLLESPKHGAINVHASLLPEYRGGAPVHYALLDGKTETGVTIMYMVEKLDAGDMISQRKIPITDEDNTGTMFDKLSKLGAELLMDTLPDFLAGKITAIPQDPEKVTFARNISREQEKIDWTKPGRTIFNQIRGLSPWPVAYTTLEEKPFKIWEATYEETKEDGEPGAILADKTTLKIVAGDGTLIVPTVIQPAGKPKMDVHSFMTGAGRNLSKTTRFGE.

109–112 (SLLP) is a (6S)-5,6,7,8-tetrahydrofolate binding site.

The protein belongs to the Fmt family.

The enzyme catalyses L-methionyl-tRNA(fMet) + (6R)-10-formyltetrahydrofolate = N-formyl-L-methionyl-tRNA(fMet) + (6S)-5,6,7,8-tetrahydrofolate + H(+). Functionally, attaches a formyl group to the free amino group of methionyl-tRNA(fMet). The formyl group appears to play a dual role in the initiator identity of N-formylmethionyl-tRNA by promoting its recognition by IF2 and preventing the misappropriation of this tRNA by the elongation apparatus. The sequence is that of Methionyl-tRNA formyltransferase from Listeria monocytogenes serotype 4b (strain CLIP80459).